The sequence spans 317 residues: Acetyl-coenzyme A carboxylase carboxyl transferase subunit alpha (317 aa).

One can recognise a CoA carboxyltransferase C-terminal domain in the interval 40-293 (LEVRVREAIV…GDVIANALGE (254 aa)).

The protein belongs to the AccA family. In terms of assembly, acetyl-CoA carboxylase is a heterohexamer composed of biotin carboxyl carrier protein (AccB), biotin carboxylase (AccC) and two subunits each of ACCase subunit alpha (AccA) and ACCase subunit beta (AccD).

The protein resides in the cytoplasm. It carries out the reaction N(6)-carboxybiotinyl-L-lysyl-[protein] + acetyl-CoA = N(6)-biotinyl-L-lysyl-[protein] + malonyl-CoA. Its pathway is lipid metabolism; malonyl-CoA biosynthesis; malonyl-CoA from acetyl-CoA: step 1/1. In terms of biological role, component of the acetyl coenzyme A carboxylase (ACC) complex. First, biotin carboxylase catalyzes the carboxylation of biotin on its carrier protein (BCCP) and then the CO(2) group is transferred by the carboxyltransferase to acetyl-CoA to form malonyl-CoA. This chain is Acetyl-coenzyme A carboxylase carboxyl transferase subunit alpha, found in Rhizobium leguminosarum bv. trifolii (strain WSM2304).